Here is a 256-residue protein sequence, read N- to C-terminus: Thiazole synthase (256 aa).

The Schiff-base intermediate with DXP role is filled by K96. Residues G157, 184-185 (AG), and 206-207 (NT) each bind 1-deoxy-D-xylulose 5-phosphate.

Belongs to the ThiG family. As to quaternary structure, homotetramer. Forms heterodimers with either ThiH or ThiS.

Its subcellular location is the cytoplasm. The enzyme catalyses [ThiS sulfur-carrier protein]-C-terminal-Gly-aminoethanethioate + 2-iminoacetate + 1-deoxy-D-xylulose 5-phosphate = [ThiS sulfur-carrier protein]-C-terminal Gly-Gly + 2-[(2R,5Z)-2-carboxy-4-methylthiazol-5(2H)-ylidene]ethyl phosphate + 2 H2O + H(+). It participates in cofactor biosynthesis; thiamine diphosphate biosynthesis. In terms of biological role, catalyzes the rearrangement of 1-deoxy-D-xylulose 5-phosphate (DXP) to produce the thiazole phosphate moiety of thiamine. Sulfur is provided by the thiocarboxylate moiety of the carrier protein ThiS. In vitro, sulfur can be provided by H(2)S. The chain is Thiazole synthase from Brucella melitensis biotype 2 (strain ATCC 23457).